Consider the following 123-residue polypeptide: Small ribosomal subunit protein uS12 (123 aa).

The tract at residues 1–22 (MATINQLVRQPRKRSVEKSDVP) is disordered. Aspartate 89 bears the 3-methylthioaspartic acid mark. The disordered stretch occupies residues 100–123 (GSLDTSGVKGRNQGRSKYGTKRPK). Basic residues predominate over residues 111–123 (NQGRSKYGTKRPK).

This sequence belongs to the universal ribosomal protein uS12 family. Part of the 30S ribosomal subunit. Contacts proteins S8 and S17. May interact with IF1 in the 30S initiation complex.

Functionally, with S4 and S5 plays an important role in translational accuracy. In terms of biological role, interacts with and stabilizes bases of the 16S rRNA that are involved in tRNA selection in the A site and with the mRNA backbone. Located at the interface of the 30S and 50S subunits, it traverses the body of the 30S subunit contacting proteins on the other side and probably holding the rRNA structure together. The combined cluster of proteins S8, S12 and S17 appears to hold together the shoulder and platform of the 30S subunit. This chain is Small ribosomal subunit protein uS12, found in Pseudomonas entomophila (strain L48).